Here is a 274-residue protein sequence, read N- to C-terminus: Rhamnulose-1-phosphate aldolase (274 aa).

Glu-117 is a catalytic residue. Zn(2+) contacts are provided by His-141, His-143, and His-212.

Belongs to the aldolase class II family. RhaD subfamily. As to quaternary structure, homotetramer. It depends on Zn(2+) as a cofactor.

The protein localises to the cytoplasm. It catalyses the reaction L-rhamnulose 1-phosphate = (S)-lactaldehyde + dihydroxyacetone phosphate. It functions in the pathway carbohydrate degradation; L-rhamnose degradation; glycerone phosphate from L-rhamnose: step 3/3. Its function is as follows. Catalyzes the reversible cleavage of L-rhamnulose-1-phosphate to dihydroxyacetone phosphate (DHAP) and L-lactaldehyde. The sequence is that of Rhamnulose-1-phosphate aldolase from Escherichia coli O17:K52:H18 (strain UMN026 / ExPEC).